The following is a 332-amino-acid chain: Glyceraldehyde-3-phosphate dehydrogenase 2 (332 aa).

NAD(+)-binding positions include 11–12 (RI), Asp32, and Arg77. D-glyceraldehyde 3-phosphate is bound by residues 148-150 (SCT), Thr179, 208-209 (TG), and Arg231. The Nucleophile role is filled by Cys149. Tyr273 is subject to Phosphotyrosine. Residue Thr274 is modified to Phosphothreonine. Position 313 (Asn313) interacts with NAD(+).

The protein belongs to the glyceraldehyde-3-phosphate dehydrogenase family. As to quaternary structure, homotetramer.

Its subcellular location is the cytoplasm. It carries out the reaction D-glyceraldehyde 3-phosphate + phosphate + NAD(+) = (2R)-3-phospho-glyceroyl phosphate + NADH + H(+). The protein operates within carbohydrate degradation; glycolysis; pyruvate from D-glyceraldehyde 3-phosphate: step 1/5. The polypeptide is Glyceraldehyde-3-phosphate dehydrogenase 2 (Gapdh2) (Drosophila melanogaster (Fruit fly)).